The chain runs to 184 residues: MAEDLVFELGADRSLLLVDDDEPFLKRLAKAMEKRGFVLETAQSVAEGKAIAQARPPAYAVVDLRLEDGNGLDVVEVLRERRPDCRIVVLTGYGAIATAVAAVKIGATDYLSKPADANEVTHALLAKGESLPPPPENPMSADRVRWEHIQRIYEMCDRNVSETARRLNMHRRTLQRILAKRSPR.

Positions 14–128 (SLLLVDDDEP…EVTHALLAKG (115 aa)) constitute a Response regulatory domain.

Phosphorylated by RegB.

Member of the two-component regulatory system RegB/RegA. Involved in transactivating anaerobic expression of the photosynthetic apparatus. It is a transcriptional regulator that is responsible for activating expression of the puf, puh, and puc operons in response to a decrease in oxygen tension. This chain is Photosynthetic apparatus regulatory protein RegA (regA), found in Cereibacter sphaeroides (strain ATCC 17023 / DSM 158 / JCM 6121 / CCUG 31486 / LMG 2827 / NBRC 12203 / NCIMB 8253 / ATH 2.4.1.) (Rhodobacter sphaeroides).